The following is a 152-amino-acid chain: Alpha-amylase inhibitor BDAI-1 (152 aa).

A signal peptide spans methionine 1–asparagine 30.

Belongs to the protease inhibitor I6 (cereal trypsin/alpha-amylase inhibitor) family. In terms of assembly, homodimer. In terms of processing, five disulfide bonds, which are essential for the inhibitor activity, are probably present. As to expression, endosperm.

The protein resides in the secreted. In terms of biological role, could be involved in insect defense mechanisms. Inhibits insect-type alpha-amylase. The sequence is that of Alpha-amylase inhibitor BDAI-1 (IAD1) from Hordeum vulgare (Barley).